A 973-amino-acid chain; its full sequence is UvrABC system protein A (973 aa).

34–41 (GLSGSGKS) serves as a coordination point for ATP. ABC transporter domains lie at 331–609 (WAKS…PKSL) and 629–958 (PKKG…HFLK). 662-669 (GVSGGGKS) provides a ligand contact to ATP. The C4-type zinc-finger motif lies at 761–787 (CEACQGDGVIKIEMHFLPDVYVTCDVC).

This sequence belongs to the ABC transporter superfamily. UvrA family. In terms of assembly, forms a heterotetramer with UvrB during the search for lesions.

The protein resides in the cytoplasm. Functionally, the UvrABC repair system catalyzes the recognition and processing of DNA lesions. UvrA is an ATPase and a DNA-binding protein. A damage recognition complex composed of 2 UvrA and 2 UvrB subunits scans DNA for abnormalities. When the presence of a lesion has been verified by UvrB, the UvrA molecules dissociate. The sequence is that of UvrABC system protein A from Agrobacterium fabrum (strain C58 / ATCC 33970) (Agrobacterium tumefaciens (strain C58)).